The sequence spans 201 residues: Mediator of RNA polymerase II transcription subunit 19 (201 aa).

Residues 166–201 are disordered; it reads GTGKSNAKKRKNRSNGSSMATPNSEMQDDVKRRRLE.

This sequence belongs to the Mediator complex subunit 19 family. Component of the Mediator complex.

The protein localises to the nucleus. Component of the Mediator complex, a coactivator involved in the regulated transcription of nearly all RNA polymerase II-dependent genes. Mediator functions as a bridge to convey information from gene-specific regulatory proteins to the basal RNA polymerase II transcription machinery. Mediator is recruited to promoters by direct interactions with regulatory proteins and serves as a scaffold for the assembly of a functional preinitiation complex with RNA polymerase II and the general transcription factors. This chain is Mediator of RNA polymerase II transcription subunit 19 (ROX3), found in Candida glabrata (strain ATCC 2001 / BCRC 20586 / JCM 3761 / NBRC 0622 / NRRL Y-65 / CBS 138) (Yeast).